A 1191-amino-acid chain; its full sequence is Serine/threonine-protein kinase dkf-2 (1191 aa).

Disordered stretches follow at residues 11–48 (YTSMPSSSTSNHRIDRLSSSSSSTFRRDDFRRHSTTTS) and 108–155 (MLSR…GGHV). The span at 123–139 (TPDDHYSNPSDKRREVP) shows a compositional bias: basic and acidic residues. Residues 140-150 (SIRSTSSNSSS) show a composition bias toward low complexity. 2 Phorbol-ester/DAG-type zinc fingers span residues 314 to 364 (PHTL…PNNC) and 466 to 531 (PHTF…AKDC). The interval 549-594 (VSEDRDDDLSLRSGSGGHKKAQNTPSAPLQGSEGSGSPGGAVVSFA) is disordered. In terms of domain architecture, PH spans 632-713 (LLKEGWIVHY…VYFVYSSLTD (82 aa)). Positions 730 to 786 (PSTVSSTDSGYLGSSGASSSCVRSREGSTVSSTITVDRTRRGGSTTSTENSEAESES) are disordered. Over residues 738–751 (SGYLGSSGASSSCV) the composition is skewed to low complexity. The segment covering 756–765 (GSTVSSTITV) has biased composition (polar residues). The segment covering 773-786 (STTSTENSEAESES) has biased composition (low complexity). The 257-residue stretch at 891-1147 (IFAEEVLGSG…VAKAQSHIWM (257 aa)) folds into the Protein kinase domain. ATP is bound by residues 897–905 (LGSGQFGTV) and Lys-920. Catalysis depends on Asp-1014, which acts as the Proton acceptor. Ser-1046 and Ser-1050 each carry phosphoserine.

This sequence belongs to the protein kinase superfamily. CAMK Ser/Thr protein kinase family. PKD subfamily. Mg(2+) is required as a cofactor. Phosphorylation on Ser-1046 is the dominant regulator of catalysis, phosphorylation on Ser-1050 has a lesser effect. Prolonged phosphorylation results in ubiquitination and degradation.

It localises to the cytoplasm. The protein localises to the membrane. It carries out the reaction L-seryl-[protein] + ATP = O-phospho-L-seryl-[protein] + ADP + H(+). It catalyses the reaction L-threonyl-[protein] + ATP = O-phospho-L-threonyl-[protein] + ADP + H(+). Its activity is regulated as follows. Activated by DAG and phorbol esters. Phorbol-ester/DAG-type domain 1 binds phorbol ester with low affinity. Phorbol-ester/DAG-type domain 2 binds phorbol ester with high affinity and targets the kinase to the cell periphery, enabling phosphorylation and activation by colocalized tpa-1. Both domains 1 and 2 appear to bind DAG with equal affinity so may contribute equally to translocation and activation. Functionally, converts transient diacylglycerol (DAG) signals into prolonged physiological effects, downstream of PKC. Acts in the intestine to regulate both innate immunity by promoting activation of pmk-1 and also stress response and life span by acting as an upstream, negative regulator of the daf-16 transcription factor. This chain is Serine/threonine-protein kinase dkf-2, found in Caenorhabditis briggsae.